We begin with the raw amino-acid sequence, 93 residues long: Large ribosomal subunit protein uL23c (93 aa).

It belongs to the universal ribosomal protein uL23 family. Part of the 50S ribosomal subunit.

The protein resides in the plastid. Its subcellular location is the chloroplast. Binds to 23S rRNA. This chain is Large ribosomal subunit protein uL23c (rpl23), found in Fragaria ananassa (Strawberry).